A 150-amino-acid chain; its full sequence is Transcriptional repressor NrdR (150 aa).

A zinc finger spans residues 3-34; sequence CPYCQFEDTRVIDSRLASEGEQVRRRRECNRC. An ATP-cone domain is found at 49–139; the sequence is PRIVKRDGTR…VYRSFEDVSA (91 aa).

It belongs to the NrdR family. Zn(2+) is required as a cofactor.

Its function is as follows. Negatively regulates transcription of bacterial ribonucleotide reductase nrd genes and operons by binding to NrdR-boxes. This is Transcriptional repressor NrdR from Alkalilimnicola ehrlichii (strain ATCC BAA-1101 / DSM 17681 / MLHE-1).